The following is a 364-amino-acid chain: Dihydroorotate dehydrogenase (quinone) (364 aa).

Residues 61-65 (AGYDK) and Thr85 each bind FMN. Lys65 provides a ligand contact to substrate. 110–114 (NRLGF) contributes to the substrate binding site. Residues Asn139 and Asn170 each coordinate FMN. Residue Asn170 participates in substrate binding. Ser173 functions as the Nucleophile in the catalytic mechanism. A substrate-binding site is contributed by Asn175. Residues Lys215 and Ser243 each coordinate FMN. 244 to 245 (NT) contacts substrate. Residues Gly266, Gly295, and 316-317 (YT) each bind FMN.

Belongs to the dihydroorotate dehydrogenase family. Type 2 subfamily. In terms of assembly, monomer. FMN is required as a cofactor.

Its subcellular location is the cell membrane. The enzyme catalyses (S)-dihydroorotate + a quinone = orotate + a quinol. It participates in pyrimidine metabolism; UMP biosynthesis via de novo pathway; orotate from (S)-dihydroorotate (quinone route): step 1/1. In terms of biological role, catalyzes the conversion of dihydroorotate to orotate with quinone as electron acceptor. The sequence is that of Dihydroorotate dehydrogenase (quinone) from Brucella abortus (strain S19).